The chain runs to 1111 residues: Lon protease homolog, mitochondrial (1111 aa).

The N-terminal 21 residues, 1–21, are a transit peptide targeting the mitochondrion; sequence MLRSSRSRLVTRNILLRQFKN. Disordered stretches follow at residues 85-177 and 288-311; these read IQLK…AKQP and PPTSEQNLKDESDVSKSEGVENNE. Positions 88–125 are enriched in basic and acidic residues; the sequence is KQDDKGKDIDQPESENRKKEEEQVPTEEKDNDTAKESE. A compositionally biased stretch (polar residues) spans 126–135; the sequence is TSQQRDSVAE. Residues 145 to 167 show a composition bias toward gly residues; sequence GASGNGESSGNGSGDDGNNGSGN. Residues 185 to 450 enclose the Lon N-terminal domain; sequence VMALPISRRP…KALTVLKKEL (266 aa). Residues 294–306 show a composition bias toward basic and acidic residues; that stretch reads NLKDESDVSKSEG. 602–609 contacts ATP; sequence GPPGVGKT. Basic and acidic residues-rich tracts occupy residues 819-835 and 853-865; these read ENEEVKDQKDIKVKQSE and ELIKTQKSHDNKG. A disordered region spans residues 819–866; sequence ENEEVKDQKDIKVKQSENKSSAEASTVESTTEENELIKTQKSHDNKGS. One can recognise a Lon proteolytic domain in the interval 899-1085; sequence STPPGVVMGL…EDVFQRLFGD (187 aa). Catalysis depends on residues serine 991 and lysine 1034.

It belongs to the peptidase S16 family. In terms of assembly, homohexamer or homoheptamer. Organized in a ring with a central cavity.

Its subcellular location is the mitochondrion matrix. It carries out the reaction Hydrolysis of proteins in presence of ATP.. In terms of biological role, ATP-dependent serine protease that mediates the selective degradation of misfolded, unassembled or oxidatively damaged polypeptides as well as certain short-lived regulatory proteins in the mitochondrial matrix. May also have a chaperone function in the assembly of inner membrane protein complexes. Participates in the regulation of mitochondrial gene expression and in the maintenance of the integrity of the mitochondrial genome. Binds to mitochondrial DNA in a site-specific manner. The polypeptide is Lon protease homolog, mitochondrial (Kluyveromyces lactis (strain ATCC 8585 / CBS 2359 / DSM 70799 / NBRC 1267 / NRRL Y-1140 / WM37) (Yeast)).